Here is a 511-residue protein sequence, read N- to C-terminus: 2'-5'-oligoadenylate synthase-like protein 1 (511 aa).

Ubiquitin-like domains are found at residues 350 to 429 (IQVT…ISPE) and 430 to 506 (IQVF…EGAA).

This sequence belongs to the 2-5A synthase family. As to quaternary structure, specifically interacts with the ligand binding domain of the thyroid receptor (TR). TRIP14 does not require the presence of thyroid hormone for its interaction. Binds MBD1.

The protein localises to the nucleus. It is found in the nucleolus. The protein resides in the cytoplasm. In terms of biological role, does not have 2'-5'-OAS activity, but can bind double-stranded RNA. Displays antiviral activity via an alternative antiviral pathway independent of RNase L. The chain is 2'-5'-oligoadenylate synthase-like protein 1 (Oasl1) from Mus musculus (Mouse).